A 154-amino-acid chain; its full sequence is MTDRPPTLADFKAPYPEPGPDQTCCIILLEEKPDEEENYRVELIPGRVMEDGLATGTVSGVVREEVIHGWGYSYYVVEMEPLVTTRRSIRSFHRPTRFVPVPTKHFIRYNSQLPVVVYLPHNTELRYRVWTPIDMQKVEPTEPEGLLKIEERAG.

Belongs to the protease inhibitor I11 (ecotin) family.

This is Ecotin-like protein 2 from Trypanosoma brucei brucei (strain 927/4 GUTat10.1).